A 156-amino-acid polypeptide reads, in one-letter code: Cytochrome c-type biogenesis protein CcmE (156 aa).

Residues 1 to 16 (MNATKAPGGIKPKHQR) lie on the Cytoplasmic side of the membrane. A helical; Signal-anchor for type II membrane protein transmembrane segment spans residues 17–37 (LVLLVIALVALIGAGLLAAYA). Residues 38-156 (LSNQASYFYV…QAEAVVAETK (119 aa)) lie on the Periplasmic side of the membrane. 2 residues coordinate heme: His-131 and Tyr-135.

Belongs to the CcmE/CycJ family.

The protein resides in the cell inner membrane. Functionally, heme chaperone required for the biogenesis of c-type cytochromes. Transiently binds heme delivered by CcmC and transfers the heme to apo-cytochromes in a process facilitated by CcmF and CcmH. The protein is Cytochrome c-type biogenesis protein CcmE of Novosphingobium aromaticivorans (strain ATCC 700278 / DSM 12444 / CCUG 56034 / CIP 105152 / NBRC 16084 / F199).